The chain runs to 156 residues: Probable low-salt glycan biosynthesis epimerase Agl13 (156 aa).

Residues arginine 19, glutamate 24, 39–41, arginine 51, histidine 54, and histidine 109 contribute to the substrate site; that span reads MSY.

Belongs to the dTDP-4-dehydrorhamnose 3,5-epimerase family.

The protein operates within protein modification; protein glycosylation. It participates in cell surface structure biogenesis; S-layer biogenesis. Epimerase involved in N-glycan biosynthetic pathway that takes place under low-salt conditions (1.75 M instead of 3.4 M). Participates in the formation of the tetrasaccharide present at 'Asn-532' of S-layer glycoprotein Csg, consisting of a sulfated hexose, 2 hexoses and rhamnose. Involved in the addition of final rhamnose (sugar 4) of the tetrasaccharide on the dolichol phosphate carrier. This Haloferax volcanii (strain ATCC 29605 / DSM 3757 / JCM 8879 / NBRC 14742 / NCIMB 2012 / VKM B-1768 / DS2) (Halobacterium volcanii) protein is Probable low-salt glycan biosynthesis epimerase Agl13 (agl13).